The following is a 509-amino-acid chain: Solute carrier family 2, facilitated glucose transporter member 4 (509 aa).

At 1-24 (MPSGFQQIGSEDGEPPQQRVTGTL) the chain is on the cytoplasmic side. The segment at 7–13 (QIGSEDG) is interaction with SRFBP1. Serine 10 bears the Phosphoserine mark. The helical transmembrane segment at 25–45 (VLAVFSAVLGSLQFGYNIGVI) threads the bilayer. The Extracellular portion of the chain corresponds to 46–81 (NAPQKVIEQSYNETWLGRQGPEGPSSIPPGTLTTLW). The N-linked (GlcNAc...) asparagine glycan is linked to asparagine 57. Residues 82-102 (ALSVAIFSVGGMISSFLIGII) form a helical membrane-spanning segment. Over 103-111 (SQWLGRKRA) the chain is Cytoplasmic. Residues 112–132 (MLVNNVLAVLGGSLMGLANAA) traverse the membrane as a helical segment. Residues 133-142 (ASYEMLILGR) lie on the Extracellular side of the membrane. A helical membrane pass occupies residues 143–163 (FLIGAYSGLTSGLVPMYVGEI). Over 164–171 (APTHLRGA) the chain is Cytoplasmic. The chain crosses the membrane as a helical span at residues 172 to 192 (LGTLNQLAIVIGILIAQVLGL). Glutamine 177 provides a ligand contact to D-glucose. Residues 193–201 (ESLLGTASL) are Extracellular-facing. A helical transmembrane segment spans residues 202 to 222 (WPLLLGLTVLPALLQLVLLPF). A lipid anchor (S-palmitoyl cysteine) is attached at cysteine 223. At 223 to 287 (CPESPRYLYI…LLGSRTHRQP (65 aa)) the chain is on the cytoplasmic side. Position 274 is a phosphoserine; by SGK1 (serine 274). A helical transmembrane segment spans residues 288–308 (LIIAVVLQLSQQLSGINAVFY). D-glucose contacts are provided by residues 298–299 (QQ) and asparagine 304. At 309 to 323 (YSTSIFETAGVGQPA) the chain is on the extracellular side. The chain crosses the membrane as a helical span at residues 324–344 (YATIGAGVVNTVFTLVSVLLV). Asparagine 333 is a D-glucose binding site. Topologically, residues 345 to 353 (ERAGRRTLH) are cytoplasmic. Residues 354–374 (LLGLAGMCGCAILMTVALLLL) traverse the membrane as a helical segment. Residues 375 to 384 (ERVPAMSYVS) lie on the Extracellular side of the membrane. Residues 385–405 (IVAIFGFVAFFEIGPGPIPWF) form a helical membrane-spanning segment. D-glucose is bound by residues glutamate 396 and tryptophan 404. Topologically, residues 406-417 (IVAELFSQGPRP) are cytoplasmic. Residues 418-438 (AAMAVAGFSNWTSNFIIGMGF) traverse the membrane as a helical segment. At 439-445 (QYVAEAM) the chain is on the extracellular side. Residues 446-466 (GPYVFLLFAVLLLGFFIFTFL) form a helical membrane-spanning segment. At 467-509 (RVPETRGRTFDQISAAFHRTPSLLEQEVKPSTELEYLGPDEND) the chain is on the cytoplasmic side. Threonine 486 is subject to Phosphothreonine. At serine 488 the chain carries Phosphoserine. A Dileucine internalization motif motif is present at residues 489–490 (LL).

This sequence belongs to the major facilitator superfamily. Sugar transporter (TC 2.A.1.1) family. Glucose transporter subfamily. In terms of assembly, interacts with NDUFA9. Binds to DAXX. Interacts via its N-terminus with SRFBP1. Interacts with TRARG1; the interaction is required for proper SLC2A4 recycling after insulin stimulation. Sumoylated. Post-translationally, palmitoylated. Palmitoylation by ZDHHC7 controls the insulin-dependent translocation of GLUT4 to the plasma membrane. As to expression, skeletal and cardiac muscles; brown and white fat.

It is found in the cell membrane. Its subcellular location is the endomembrane system. The protein resides in the cytoplasm. The protein localises to the perinuclear region. The enzyme catalyses D-glucose(out) = D-glucose(in). In terms of biological role, insulin-regulated facilitative glucose transporter, which plays a key role in removal of glucose from circulation. Response to insulin is regulated by its intracellular localization: in the absence of insulin, it is efficiently retained intracellularly within storage compartments in muscle and fat cells. Upon insulin stimulation, translocates from these compartments to the cell surface where it transports glucose from the extracellular milieu into the cell. The chain is Solute carrier family 2, facilitated glucose transporter member 4 from Homo sapiens (Human).